Here is a 482-residue protein sequence, read N- to C-terminus: Membrane-bound lytic murein transglycosylase F (482 aa).

Positions M1 to A18 are cleaved as a signal peptide. The segment at I19–I267 is non-LT domain. Positions S268–D482 are LT domain. Residue E312 is part of the active site. Positions E457 to A470 are enriched in polar residues. The segment at E457–D482 is disordered. Residues N473 to D482 show a composition bias toward basic and acidic residues.

This sequence in the N-terminal section; belongs to the bacterial solute-binding protein 3 family. The protein in the C-terminal section; belongs to the transglycosylase Slt family.

The protein localises to the cell outer membrane. It carries out the reaction Exolytic cleavage of the (1-&gt;4)-beta-glycosidic linkage between N-acetylmuramic acid (MurNAc) and N-acetylglucosamine (GlcNAc) residues in peptidoglycan, from either the reducing or the non-reducing ends of the peptidoglycan chains, with concomitant formation of a 1,6-anhydrobond in the MurNAc residue.. Murein-degrading enzyme that degrades murein glycan strands and insoluble, high-molecular weight murein sacculi, with the concomitant formation of a 1,6-anhydromuramoyl product. Lytic transglycosylases (LTs) play an integral role in the metabolism of the peptidoglycan (PG) sacculus. Their lytic action creates space within the PG sacculus to allow for its expansion as well as for the insertion of various structures such as secretion systems and flagella. The polypeptide is Membrane-bound lytic murein transglycosylase F (Haemophilus influenzae (strain PittGG)).